The following is a 168-amino-acid chain: ATP synthase subunit b (168 aa).

Residues 10–30 (STILGNFILVTASFAVLIILI) form a helical membrane-spanning segment.

It belongs to the ATPase B chain family. In terms of assembly, F-type ATPases have 2 components, F(1) - the catalytic core - and F(0) - the membrane proton channel. F(1) has five subunits: alpha(3), beta(3), gamma(1), delta(1), epsilon(1). F(0) has three main subunits: a(1), b(2) and c(10-14). The alpha and beta chains form an alternating ring which encloses part of the gamma chain. F(1) is attached to F(0) by a central stalk formed by the gamma and epsilon chains, while a peripheral stalk is formed by the delta and b chains.

The protein resides in the cell membrane. Functionally, f(1)F(0) ATP synthase produces ATP from ADP in the presence of a proton or sodium gradient. F-type ATPases consist of two structural domains, F(1) containing the extramembraneous catalytic core and F(0) containing the membrane proton channel, linked together by a central stalk and a peripheral stalk. During catalysis, ATP synthesis in the catalytic domain of F(1) is coupled via a rotary mechanism of the central stalk subunits to proton translocation. Its function is as follows. Component of the F(0) channel, it forms part of the peripheral stalk, linking F(1) to F(0). The protein is ATP synthase subunit b of Streptococcus suis (strain 98HAH33).